The following is a 196-amino-acid chain: Oocyte zinc finger protein XlCOF26 (196 aa).

7 C2H2-type zinc fingers span residues 6-28 (YSCT…QKNH), 34-56 (FTCT…QRIH), 62-84 (FTCT…QRIH), 90-112 (FTCT…HKIH), 118-140 (FTCP…QRTH), 146-168 (FTCT…QSTH), and 174-196 (FTCT…QMTH).

Belongs to the krueppel C2H2-type zinc-finger protein family.

It localises to the nucleus. In terms of biological role, may be involved in transcriptional regulation. This is Oocyte zinc finger protein XlCOF26 from Xenopus laevis (African clawed frog).